A 573-amino-acid polypeptide reads, in one-letter code: Glutamate--tRNA ligase (573 aa).

The 'HIGH' region signature appears at 106–116 (PNPDGAFHLGN).

The protein belongs to the class-I aminoacyl-tRNA synthetase family. Glutamate--tRNA ligase type 2 subfamily.

The protein localises to the cytoplasm. It carries out the reaction tRNA(Glu) + L-glutamate + ATP = L-glutamyl-tRNA(Glu) + AMP + diphosphate. Its function is as follows. Catalyzes the attachment of glutamate to tRNA(Glu) in a two-step reaction: glutamate is first activated by ATP to form Glu-AMP and then transferred to the acceptor end of tRNA(Glu). The polypeptide is Glutamate--tRNA ligase (Thermococcus onnurineus (strain NA1)).